A 954-amino-acid polypeptide reads, in one-letter code: Glycine dehydrogenase (decarboxylating) (954 aa).

N6-(pyridoxal phosphate)lysine is present on lysine 699.

Belongs to the GcvP family. The glycine cleavage system is composed of four proteins: P, T, L and H. Pyridoxal 5'-phosphate is required as a cofactor.

It carries out the reaction N(6)-[(R)-lipoyl]-L-lysyl-[glycine-cleavage complex H protein] + glycine + H(+) = N(6)-[(R)-S(8)-aminomethyldihydrolipoyl]-L-lysyl-[glycine-cleavage complex H protein] + CO2. The glycine cleavage system catalyzes the degradation of glycine. The P protein binds the alpha-amino group of glycine through its pyridoxal phosphate cofactor; CO(2) is released and the remaining methylamine moiety is then transferred to the lipoamide cofactor of the H protein. The chain is Glycine dehydrogenase (decarboxylating) from Nitrobacter winogradskyi (strain ATCC 25391 / DSM 10237 / CIP 104748 / NCIMB 11846 / Nb-255).